Reading from the N-terminus, the 430-residue chain is Tryptophan synthase beta chain (430 aa).

Lysine 95 is modified (N6-(pyridoxal phosphate)lysine).

It belongs to the TrpB family. As to quaternary structure, tetramer of two alpha and two beta chains. Pyridoxal 5'-phosphate serves as cofactor.

It carries out the reaction (1S,2R)-1-C-(indol-3-yl)glycerol 3-phosphate + L-serine = D-glyceraldehyde 3-phosphate + L-tryptophan + H2O. It participates in amino-acid biosynthesis; L-tryptophan biosynthesis; L-tryptophan from chorismate: step 5/5. In terms of biological role, the beta subunit is responsible for the synthesis of L-tryptophan from indole and L-serine. This chain is Tryptophan synthase beta chain, found in Halobacterium salinarum (strain ATCC 29341 / DSM 671 / R1).